The sequence spans 298 residues: Acetyl-coenzyme A carboxylase carboxyl transferase subunit beta (298 aa).

The interval 1–21 (MNQEVKSGKVLSPSTPWTQRP) is disordered. In terms of domain architecture, CoA carboxyltransferase N-terminal spans 41 to 298 (PTIECPECHA…RLVSKLMNLP (258 aa)). Zn(2+) is bound by residues Cys45, Cys48, Cys64, and Cys67. Residues 45 to 67 (CPECHALVTRTAISFNAYVCPQC) form a C4-type zinc finger.

The protein belongs to the AccD/PCCB family. As to quaternary structure, acetyl-CoA carboxylase is a heterohexamer composed of biotin carboxyl carrier protein (AccB), biotin carboxylase (AccC) and two subunits each of ACCase subunit alpha (AccA) and ACCase subunit beta (AccD). It depends on Zn(2+) as a cofactor.

It localises to the cytoplasm. The catalysed reaction is N(6)-carboxybiotinyl-L-lysyl-[protein] + acetyl-CoA = N(6)-biotinyl-L-lysyl-[protein] + malonyl-CoA. It participates in lipid metabolism; malonyl-CoA biosynthesis; malonyl-CoA from acetyl-CoA: step 1/1. In terms of biological role, component of the acetyl coenzyme A carboxylase (ACC) complex. Biotin carboxylase (BC) catalyzes the carboxylation of biotin on its carrier protein (BCCP) and then the CO(2) group is transferred by the transcarboxylase to acetyl-CoA to form malonyl-CoA. The polypeptide is Acetyl-coenzyme A carboxylase carboxyl transferase subunit beta (Acinetobacter baumannii (strain AYE)).